Reading from the N-terminus, the 105-residue chain is Replication restart protein PriB (105 aa).

Residues 1-102 form the SSB domain; it reads MTANRLTLSG…LHAEQIELID (102 aa).

The protein belongs to the PriB family. In terms of assembly, homodimer. Interacts with PriA and DnaT. Component of the replication restart primosome. Primosome assembly occurs via a 'hand-off' mechanism. PriA binds to replication forks, subsequently PriB then DnaT bind; DnaT then displaces ssDNA to generate the helicase loading substrate.

In terms of biological role, involved in the restart of stalled replication forks, which reloads the replicative helicase on sites other than the origin of replication; the PriA-PriB pathway is the major replication restart pathway. During primosome assembly it facilitates complex formation between PriA and DnaT on DNA; stabilizes PriA on DNA. Stimulates the DNA unwinding activity of PriA helicase. In Erwinia tasmaniensis (strain DSM 17950 / CFBP 7177 / CIP 109463 / NCPPB 4357 / Et1/99), this protein is Replication restart protein PriB.